Consider the following 335-residue polypeptide: Holliday junction branch migration complex subunit RuvB (335 aa).

A large ATPase domain (RuvB-L) region spans residues 1 to 181; that stretch reads MDRIVEIEKY…FGMQFRLEFY (181 aa). Leucine 20 contributes to the ATP binding site. 9 residues coordinate ADP: arginine 21, tyrosine 28, isoleucine 29, glycine 62, leucine 63, glycine 64, lysine 65, threonine 66, and threonine 67. ATP contacts are provided by residues 128 to 130 and arginine 171; that span reads EDY. Positions 181 and 218 each coordinate ADP. The interval 182 to 252 is small ATPAse domain (RuvB-S); sequence KDSELALILQ…RANEALNSLG (71 aa). The interval 255–335 is head domain (RuvB-H); the sequence is ELGFDAMDLR…LNYEKTLFEE (81 aa). Residues arginine 309 and arginine 314 each contribute to the DNA site.

Belongs to the RuvB family. As to quaternary structure, homohexamer. Forms an RuvA(8)-RuvB(12)-Holliday junction (HJ) complex. HJ DNA is sandwiched between 2 RuvA tetramers; dsDNA enters through RuvA and exits via RuvB. An RuvB hexamer assembles on each DNA strand where it exits the tetramer. Each RuvB hexamer is contacted by two RuvA subunits (via domain III) on 2 adjacent RuvB subunits; this complex drives branch migration. In the full resolvosome a probable DNA-RuvA(4)-RuvB(12)-RuvC(2) complex forms which resolves the HJ.

The protein localises to the cytoplasm. It catalyses the reaction ATP + H2O = ADP + phosphate + H(+). In terms of biological role, the RuvA-RuvB-RuvC complex processes Holliday junction (HJ) DNA during genetic recombination and DNA repair, while the RuvA-RuvB complex plays an important role in the rescue of blocked DNA replication forks via replication fork reversal (RFR). RuvA specifically binds to HJ cruciform DNA, conferring on it an open structure. The RuvB hexamer acts as an ATP-dependent pump, pulling dsDNA into and through the RuvAB complex. RuvB forms 2 homohexamers on either side of HJ DNA bound by 1 or 2 RuvA tetramers; 4 subunits per hexamer contact DNA at a time. Coordinated motions by a converter formed by DNA-disengaged RuvB subunits stimulates ATP hydrolysis and nucleotide exchange. Immobilization of the converter enables RuvB to convert the ATP-contained energy into a lever motion, pulling 2 nucleotides of DNA out of the RuvA tetramer per ATP hydrolyzed, thus driving DNA branch migration. The RuvB motors rotate together with the DNA substrate, which together with the progressing nucleotide cycle form the mechanistic basis for DNA recombination by continuous HJ branch migration. Branch migration allows RuvC to scan DNA until it finds its consensus sequence, where it cleaves and resolves cruciform DNA. In Campylobacter jejuni subsp. jejuni serotype O:2 (strain ATCC 700819 / NCTC 11168), this protein is Holliday junction branch migration complex subunit RuvB.